Consider the following 87-residue polypeptide: uncharacterized protein (87 aa).

The segment at 52-87 (KWQPRPDANNSDTTTSTEDSTTDTETEYSTTEDELA) is disordered. The segment covering 71-87 (STTDTETEYSTTEDELA) has biased composition (acidic residues).

This is an uncharacterized protein from Autographa californica nuclear polyhedrosis virus (AcMNPV).